The primary structure comprises 309 residues: Taste receptor type 2 member 45 (309 aa).

Met-1 is a topological domain (extracellular). The chain crosses the membrane as a helical span at residues 2 to 22 (ITFLPIIFSILVVVTFVIGNF). Over 23–55 (ANGFIALVNSTEWVKRQKISFADQIVTALAVSR) the chain is Cytoplasmic. The chain crosses the membrane as a helical span at residues 56–76 (VGLLWVLLLNWYSTVLNPAFY). Residues 77–98 (SVELRTTAYNIWAVTGHFSNWL) lie on the Extracellular side of the membrane. Residues 99–119 (ATSLSIFYLLKIANFSNLIFL) form a helical membrane-spanning segment. Over 120–126 (HLKRRVK) the chain is Cytoplasmic. The chain crosses the membrane as a helical span at residues 127 to 147 (SVILVMLLGPLLFLACHLFVV). Residues 148 to 178 (NMNQIVWTKEYEGNMTWKIKLRRAMYLSDTT) lie on the Extracellular side of the membrane. Asn-161 carries an N-linked (GlcNAc...) asparagine glycan. A helical membrane pass occupies residues 179-199 (VTMLANLVPFTVTLISFLLLV). At 200–229 (CSLCEHLKKMQLHGKGSQDPSTKVHIKALQ) the chain is on the cytoplasmic side. Residues 230–250 (TVISFLLLCAIYFVSVIISVW) form a helical membrane-spanning segment. The Extracellular segment spans residues 251-259 (SFKNLENKP). A helical membrane pass occupies residues 260–280 (VFMFCQAIGFSCSSAHPFILI). Over 281–309 (WGNKKLKQPFLSVLWQMRYWVKGEKPSSS) the chain is Cytoplasmic.

Belongs to the G-protein coupled receptor T2R family.

It localises to the membrane. Functionally, receptor that may play a role in the perception of bitterness and is gustducin-linked. May play a role in sensing the chemical composition of the gastrointestinal content. The activity of this receptor may stimulate alpha gustducin, mediate PLC-beta-2 activation and lead to the gating of TRPM5. This chain is Taste receptor type 2 member 45 (TAS2R45), found in Pan paniscus (Pygmy chimpanzee).